The primary structure comprises 253 residues: MGDTITLLSRREIEKMRQAGQLAAALLDHLAPMVQPGITTLELNDEAEKWTKAHGAISAPLGYNGFPKSICTSINEVICHGIPHRKRVLQAGDIINVDVTPIVDGYHGDCSRTFFVGTPSPVAEKLVKVTEECLRLGIEAVKPGGKIGDIGAAIQSHAEAQGFSVVRDFVGHGISKIFHTAPQIPHYGKAGKGKRLRPGMVFTIEPMINEGTWEAVLLDDGWTAITKDGKLSAQFEHTIAVTEDGVEILTLGE.

Residue His-80 participates in substrate binding. A divalent metal cation contacts are provided by Asp-98, Asp-109, and His-172. His-179 provides a ligand contact to substrate. A divalent metal cation is bound by residues Glu-205 and Glu-236.

The protein belongs to the peptidase M24A family. Methionine aminopeptidase type 1 subfamily. In terms of assembly, monomer. Co(2+) is required as a cofactor. The cofactor is Zn(2+). Mn(2+) serves as cofactor. It depends on Fe(2+) as a cofactor.

The enzyme catalyses Release of N-terminal amino acids, preferentially methionine, from peptides and arylamides.. Removes the N-terminal methionine from nascent proteins. The N-terminal methionine is often cleaved when the second residue in the primary sequence is small and uncharged (Met-Ala-, Cys, Gly, Pro, Ser, Thr, or Val). Requires deformylation of the N(alpha)-formylated initiator methionine before it can be hydrolyzed. This Synechocystis sp. (strain ATCC 27184 / PCC 6803 / Kazusa) protein is Methionine aminopeptidase A.